The primary structure comprises 515 residues: MNTLQNLTLKMDRQPTIRMKPDKQLDCSLSQDDGVWMMASSFIIFTMTAGFGLLESGRVSSKDEVNCMVKNVFDVIFGGLAYWMFGYGLTFGDSKHQLGRYVGFGDFFFDPERVSDDDSTDEKGISYSLFIFQMSFATTTSTIVSAGMSERIHLKSHCFISFFITLVHSVAGHWVWDQEGVFRMMGVVDSAGCSAVHLVGGVSGLVATLYLKPRRNRFAKNGIRTVSDPTKAILGFLMIWWGWLAFNTSSNYAVTHGQWTEGMRSAVGTILASAGGGVVTVIITRLSTKKIQMDMLIDGMLASLVASTGGCLYFTPWQATLVGAIGSSLALAAYPVTEWLKIDDPVGVFPVHVVGSIWGMIAPAIFVYRRPMNFGPPECDFQTSDEINGLLYGGGFYLLFLQSFVILVIGTYSAICAFIILFLIHHSPVGLRVDKYTEELGADLIEHGLAGFNVMTYTIEKKLDTKTLSAVLMIIVRWRAKAKLGAQRRKKIHDSGSVAPQQAESVEMNVIHRRH.

Helical transmembrane passes span 34–54 (GVWM…FGLL), 72–92 (VFDV…LTFG), 124–144 (GISY…STIV), 156–176 (SHCF…HWVW), 191–211 (AGCS…TLYL), 226–246 (VSDP…WLAF), 266–286 (AVGT…ITRL), 291–311 (IQMD…TGGC), 321–337 (LVGA…YPVT), 346–366 (VGVF…PAIF), 381–401 (FQTS…LLFL), and 404–424 (FVIL…LFLI).

The protein belongs to the ammonia transporter channel (TC 1.A.11.2) family.

It is found in the membrane. In terms of biological role, involved in the uptake of ammonia. Implicated in aging. The polypeptide is Putative ammonium transporter 2 (amt-2) (Caenorhabditis elegans).